A 142-amino-acid polypeptide reads, in one-letter code: Large ribosomal subunit protein uL11 (142 aa).

This sequence belongs to the universal ribosomal protein uL11 family. As to quaternary structure, part of the ribosomal stalk of the 50S ribosomal subunit. Interacts with L10 and the large rRNA to form the base of the stalk. L10 forms an elongated spine to which L12 dimers bind in a sequential fashion forming a multimeric L10(L12)X complex. In terms of processing, one or more lysine residues are methylated.

Functionally, forms part of the ribosomal stalk which helps the ribosome interact with GTP-bound translation factors. The chain is Large ribosomal subunit protein uL11 from Afipia carboxidovorans (strain ATCC 49405 / DSM 1227 / KCTC 32145 / OM5) (Oligotropha carboxidovorans).